The chain runs to 109 residues: uncharacterized protein (109 aa).

3 helical membrane-spanning segments follow: residues 7–27 (IITI…PFFV), 37–57 (YIRY…VVYC), and 63–83 (ILTG…LGLH).

The protein belongs to the AzlD/HI_1737/HP1330 family.

Its subcellular location is the cell membrane. This is an uncharacterized protein from Haemophilus influenzae (strain ATCC 51907 / DSM 11121 / KW20 / Rd).